The primary structure comprises 1015 residues: Cytosolic carboxypeptidase 1 (1015 aa).

The interval 384-462 (LPTATPSTPG…GALPKTTRLN (79 aa)) is disordered. The span at 416–451 (EDGMDEEDEAFVRDDDDEGKDDRGSDDDDGKDDDEI) shows a compositional bias: acidic residues. The Peptidase M14 domain occupies 727 to 1013 (YPYTYSFLNS…DLLHSFLEMT (287 aa)). The Zn(2+) site is built by His-792, Glu-795, and His-891. Glu-977 functions as the Proton donor/acceptor in the catalytic mechanism.

This sequence belongs to the peptidase M14 family. The cofactor is Zn(2+). As to expression, in hermaphrodites and males, expressed in amphid and IL2 ciliated sensory neurons. In males, expressed in CEM head neurons, RnB and HOB tail neurons, and in gubernacular erector and retractor muscles.

The protein localises to the perikaryon. It localises to the cell projection. It is found in the cilium. Its subcellular location is the dendrite. Its function is as follows. Catalyzes the deglutamylation of polyglutamate side chains generated by post-translational polyglutamylation of proteins such as tubulins. Via the deglutamylation of tubulin, regulates the localization and velocity of kinesin motors and the structural integrity of microtubules in sensory cilia. In male CEM sensory neurons, regulates the cilia release of bioactive extracellular vesicles. Also regulates microtubule dynamics in uterine muscle cells. This Caenorhabditis elegans protein is Cytosolic carboxypeptidase 1.